Consider the following 188-residue polypeptide: uncharacterized protein (188 aa).

A signal peptide spans 1–23; that stretch reads MVRPKLAFYILPLLLAFLGSALG. A glycan (N-linked (GlcNAc...) asparagine) is linked at N74.

This is an uncharacterized protein from Mus musculus (Mouse).